The chain runs to 133 residues: Cell division protein FtsL (133 aa).

Residues 1-45 are Cytoplasmic-facing; sequence MAVEKVYQPYDEQVYNSIPKQQPQTKPEKKTVSRKVVVQLTKFEK. A helical transmembrane segment spans residues 46–65; that stretch reads VLYITLITVIAMLSIYMLSL. At 66 to 133 the chain is on the extracellular side; it reads KMDAYDTRGK…VVRSNGEAKN (68 aa).

The protein belongs to the FtsL family.

The protein localises to the cell membrane. In terms of biological role, essential cell division protein. The protein is Cell division protein FtsL of Staphylococcus aureus (strain NCTC 8325 / PS 47).